The chain runs to 562 residues: Catalase T (562 aa).

Catalysis depends on residues His64 and Asn137. Tyr351 serves as a coordination point for heme.

This sequence belongs to the catalase family. As to quaternary structure, homotetramer. Heme serves as cofactor.

Its subcellular location is the cytoplasm. It catalyses the reaction 2 H2O2 = O2 + 2 H2O. Occurs in almost all aerobically respiring organisms and serves to protect cells from the toxic effects of hydrogen peroxide. This is Catalase T (CTT1) from Saccharomyces cerevisiae (strain ATCC 204508 / S288c) (Baker's yeast).